We begin with the raw amino-acid sequence, 124 residues long: Acidic phospholipase A2 A (124 aa).

7 disulfide bridges follow: Cys26/Cys116, Cys28/Cys44, Cys43/Cys95, Cys49/Cys124, Cys50/Cys88, Cys57/Cys81, and Cys75/Cys86. The Ca(2+) site is built by Tyr27, Gly29, and Gly31. Residue His47 is part of the active site. A Ca(2+)-binding site is contributed by Asp48. Asp89 is a catalytic residue.

This sequence belongs to the phospholipase A2 family. Group II subfamily. D49 sub-subfamily. Requires Ca(2+) as cofactor. As to expression, expressed by the venom gland.

Its subcellular location is the secreted. The enzyme catalyses a 1,2-diacyl-sn-glycero-3-phosphocholine + H2O = a 1-acyl-sn-glycero-3-phosphocholine + a fatty acid + H(+). Its function is as follows. PLA2 catalyzes the calcium-dependent hydrolysis of the 2-acyl groups in 3-sn-phosphoglycerides. The polypeptide is Acidic phospholipase A2 A (Gloydius halys (Chinese water mocassin)).